Reading from the N-terminus, the 193-residue chain is Anthranilate synthase component 2 (193 aa).

The region spanning 3–193 is the Glutamine amidotransferase type-1 domain; that stretch reads NILFLDNFDS…QQSIEWLLNR (191 aa). L-glutamine is bound at residue 57–59; it reads GPG. Catalysis depends on Cys84, which acts as the Nucleophile; for GATase activity. Residues Gln88 and 134–135 contribute to the L-glutamine site; that span reads SL. Active-site for GATase activity residues include His170 and Glu172.

In terms of assembly, heterotetramer consisting of two non-identical subunits: a beta subunit (TrpG) and a large alpha subunit (TrpE).

It catalyses the reaction chorismate + L-glutamine = anthranilate + pyruvate + L-glutamate + H(+). The protein operates within amino-acid biosynthesis; L-tryptophan biosynthesis; L-tryptophan from chorismate: step 1/5. Part of a heterotetrameric complex that catalyzes the two-step biosynthesis of anthranilate, an intermediate in the biosynthesis of L-tryptophan. In the first step, the glutamine-binding beta subunit (TrpG) of anthranilate synthase (AS) provides the glutamine amidotransferase activity which generates ammonia as a substrate that, along with chorismate, is used in the second step, catalyzed by the large alpha subunit of AS (TrpE) to produce anthranilate. In the absence of TrpG, TrpE can synthesize anthranilate directly from chorismate and high concentrations of ammonia. The sequence is that of Anthranilate synthase component 2 (trpG) from Haemophilus influenzae (strain ATCC 51907 / DSM 11121 / KW20 / Rd).